The chain runs to 218 residues: MNQICLEYFGNSVARVKKALENLKNGHGVMVLDDENRENEGDFVFAAETMTVEQMALTIRHGSGIVCLCLTEERCQQLELPMMVEKNSSTFQTPFTVSIEAAKGVTTGVSASDRITTIKAAISQTAKPADLHRPGHVFPLKGHPKGVLGRSGHTEAAIDLARLAGLKPAGVLCELTNDNGTMARAPEVIAFAKKHKMTVLSIEDLIEYRQTHMETNFS.

D-ribulose 5-phosphate contacts are provided by residues 37–38, Asp-42, 150–154, and Glu-174; these read RE and RSGHT. A Mg(2+)-binding site is contributed by Glu-38. Residue His-153 coordinates Mg(2+).

The protein belongs to the DHBP synthase family. Homodimer. Requires Mg(2+) as cofactor. The cofactor is Mn(2+).

It carries out the reaction D-ribulose 5-phosphate = (2S)-2-hydroxy-3-oxobutyl phosphate + formate + H(+). It participates in cofactor biosynthesis; riboflavin biosynthesis; 2-hydroxy-3-oxobutyl phosphate from D-ribulose 5-phosphate: step 1/1. In terms of biological role, catalyzes the conversion of D-ribulose 5-phosphate to formate and 3,4-dihydroxy-2-butanone 4-phosphate. This is 3,4-dihydroxy-2-butanone 4-phosphate synthase from Hamiltonella defensa subsp. Acyrthosiphon pisum (strain 5AT).